The primary structure comprises 391 residues: Na(+)/H(+) antiporter NhaA (391 aa).

11 consecutive transmembrane segments (helical) span residues 14-34 (AGGILLMVSVVLAMILANSPL), 59-79 (LIHWINDGLMAIFFMLIGLEV), 95-115 (SLPTFAAIGGMVFPAAVYLIF), 124-144 (VGWAIPAATDIAFALGIMALL), 154-174 (VFLLALAIIDDLGVVVIIALF), 177-197 (TDLSTISLIIAAAAILGLIGL), 213-233 (LILWIAVLKSGVHATLAGVII), 261-281 (FIILPIFAFANAGVDLSGMSL), 292-312 (IALGLLVGKPLGIMLFSYIAV), 331-351 (VAVMCGIGFTMSMFISSLAFV), and 363-383 (LGILLGSIASATIGYFWLSKV).

This sequence belongs to the NhaA Na(+)/H(+) (TC 2.A.33) antiporter family.

Its subcellular location is the cell inner membrane. It catalyses the reaction Na(+)(in) + 2 H(+)(out) = Na(+)(out) + 2 H(+)(in). Functionally, na(+)/H(+) antiporter that extrudes sodium in exchange for external protons. The protein is Na(+)/H(+) antiporter NhaA of Shewanella pealeana (strain ATCC 700345 / ANG-SQ1).